The following is a 396-amino-acid chain: Exodeoxyribonuclease 7 large subunit (396 aa).

The protein belongs to the XseA family. In terms of assembly, heterooligomer composed of large and small subunits.

The protein localises to the cytoplasm. The enzyme catalyses Exonucleolytic cleavage in either 5'- to 3'- or 3'- to 5'-direction to yield nucleoside 5'-phosphates.. Functionally, bidirectionally degrades single-stranded DNA into large acid-insoluble oligonucleotides, which are then degraded further into small acid-soluble oligonucleotides. This is Exodeoxyribonuclease 7 large subunit from Clostridium tetani (strain Massachusetts / E88).